Consider the following 65-residue polypeptide: Large ribosomal subunit protein bL35 (65 aa).

A disordered region spans residues 1-23; sequence MPKMKTHRGAAKRFKKTGTGKLK.

It belongs to the bacterial ribosomal protein bL35 family.

In Clostridium perfringens (strain ATCC 13124 / DSM 756 / JCM 1290 / NCIMB 6125 / NCTC 8237 / Type A), this protein is Large ribosomal subunit protein bL35.